The sequence spans 226 residues: ATP synthase F(0) complex subunit a (226 aa).

The next 6 membrane-spanning stretches (helical) occupy residues 6-26 (FASFITPMMFGLPLVTLIVLF), 68-88 (WALMLMSLILFIGSTNLLGLL), 97-117 (QLSMNLGMAIPLWGGAVITGF), 138-158 (IPMLVIIETISLFIQPVALAV), 164-184 (ITAGHLLIHLIGGATLALMSI), and 189-209 (ALITFIILILLTVLEFAVAMI).

The protein belongs to the ATPase A chain family. In terms of assembly, component of the ATP synthase complex composed at least of ATP5F1A/subunit alpha, ATP5F1B/subunit beta, ATP5MC1/subunit c (homooctomer), MT-ATP6/subunit a, MT-ATP8/subunit 8, ATP5ME/subunit e, ATP5MF/subunit f, ATP5MG/subunit g, ATP5MK/subunit k, ATP5MJ/subunit j, ATP5F1C/subunit gamma, ATP5F1D/subunit delta, ATP5F1E/subunit epsilon, ATP5PF/subunit F6, ATP5PB/subunit b, ATP5PD/subunit d, ATP5PO/subunit OSCP. ATP synthase complex consists of a soluble F(1) head domain (subunits alpha(3) and beta(3)) - the catalytic core - and a membrane F(0) domain - the membrane proton channel (subunits c, a, 8, e, f, g, k and j). These two domains are linked by a central stalk (subunits gamma, delta, and epsilon) rotating inside the F1 region and a stationary peripheral stalk (subunits F6, b, d, and OSCP). Interacts with DNAJC30; interaction is direct.

The protein localises to the mitochondrion inner membrane. It catalyses the reaction H(+)(in) = H(+)(out). Its function is as follows. Subunit a, of the mitochondrial membrane ATP synthase complex (F(1)F(0) ATP synthase or Complex V) that produces ATP from ADP in the presence of a proton gradient across the membrane which is generated by electron transport complexes of the respiratory chain. ATP synthase complex consist of a soluble F(1) head domain - the catalytic core - and a membrane F(1) domain - the membrane proton channel. These two domains are linked by a central stalk rotating inside the F(1) region and a stationary peripheral stalk. During catalysis, ATP synthesis in the catalytic domain of F(1) is coupled via a rotary mechanism of the central stalk subunits to proton translocation. With the subunit c (ATP5MC1), forms the proton-conducting channel in the F(0) domain, that contains two crucial half-channels (inlet and outlet) that facilitate proton movement from the mitochondrial intermembrane space (IMS) into the matrix. Protons are taken up via the inlet half-channel and released through the outlet half-channel, following a Grotthuss mechanism. The polypeptide is ATP synthase F(0) complex subunit a (Ovis aries (Sheep)).